Here is a 168-residue protein sequence, read N- to C-terminus: DAZ-associated protein 2 (168 aa).

Residues 1–13 (MNSKGQYPTQPTY) show a composition bias toward low complexity. The interval 1–25 (MNSKGQYPTQPTYPVQPPGNPVYPQ) is disordered. The PPAY motif lies at 39–42 (PPAY). A Phosphoserine modification is found at serine 77.

In terms of assembly, interacts with SOX6. Interacts with DAZ1 and DAZL. Interacts with IL17RB. May interact with FAM168B. Interacts with INCA1. Interacts with EIF4G1 and EIF4G2. Interacts (via PPAY motif) with NEDD4 (via WW domains). Interacts with transcription factor TCF4; the interaction results in localization of DAZAP2 to the nucleus. Interacts with transcription factors TCF7 and TCF7L1. Interacts with transcription factor LEF1. Interacts with serine/threonine-protein kinase HIPK2; the interaction results in phosphorylation of DAZAP2 which causes localization of DAZAP2 to the nucleus, reduces interaction of DAZAP2 with HIPK2 and prevents DAZAP2-dependent degradation of HIPK2. Interacts with ubiquitin ligase SIAH1; the interaction is decreased following phosphorylation of DAZAP2 by HIPK2. Interacts with TP53; the interaction is triggered by DNA damage. Post-translationally, ubiquitinated by SMURF2, leading to proteasomal degradation. Ubiquitinated by NEDD4, leading to proteasomal degradation. Following DNA damage, phosphorylated by HIPK2 which promotes DAZAP2 localization to the nucleus, reduces interaction of DAZAP2 with HIPK2 and SIAH1, and prevents DAZAP2-dependent ubiquitination of HIPK2 by E3 ubiquitin-protein ligase SIAH1 and subsequent HIPK2 proteasomal degradation. Widely expressed. Highly expressed in brain.

The protein localises to the cytoplasm. Its subcellular location is the nucleus. It is found in the nucleus speckle. The protein resides in the nuclear body. It localises to the stress granule. Its function is as follows. In unstressed cells, promotes SIAH1-mediated polyubiquitination and degradation of the serine/threonine-protein kinase HIPK2, probably by acting as a loading factor that potentiates complex formation between HIPK2 and ubiquitin ligase SIAH1. In response to DNA damage, localizes to the nucleus following phosphorylation by HIPK2 and modulates the expression of a subset of TP53/p53 target genes by binding to TP53 at target gene promoters. This limits the expression of a number of cell death-mediating TP53 target genes, reducing DNA damage-induced cell death. Enhances the binding of transcription factor TCF7L2/TCF4, a Wnt signaling pathway effector, to the promoters of target genes. Plays a role in stress granule formation. This Mus musculus (Mouse) protein is DAZ-associated protein 2 (Dazap2).